Reading from the N-terminus, the 181-residue chain is Large ribosomal subunit protein bL19 (181 aa).

Basic and acidic residues predominate over residues 162–173; it reads EKKAAAEAEAAK. Residues 162-181 form a disordered region; sequence EKKAAAEAEAAKAAEATPAE.

Belongs to the bacterial ribosomal protein bL19 family.

This protein is located at the 30S-50S ribosomal subunit interface and may play a role in the structure and function of the aminoacyl-tRNA binding site. The chain is Large ribosomal subunit protein bL19 from Mesorhizobium japonicum (strain LMG 29417 / CECT 9101 / MAFF 303099) (Mesorhizobium loti (strain MAFF 303099)).